The chain runs to 114 residues: MRVKKGFKARRRRNRVLKLAKGFRGRRKNCYRRANQAVERALNYSTRDRRLKRREFRALWIVRINAAARQNGTTYSKLVAALRKAGIEIDRKILADLALALPGDFAAIVKTAQA.

Belongs to the bacterial ribosomal protein bL20 family.

Binds directly to 23S ribosomal RNA and is necessary for the in vitro assembly process of the 50S ribosomal subunit. It is not involved in the protein synthesizing functions of that subunit. In Anaeromyxobacter dehalogenans (strain 2CP-1 / ATCC BAA-258), this protein is Large ribosomal subunit protein bL20.